A 385-amino-acid polypeptide reads, in one-letter code: 8-amino-7-oxononanoate synthase (385 aa).

Residue Arg-21 coordinates substrate. Position 108 to 109 (108 to 109) interacts with pyridoxal 5'-phosphate; that stretch reads GF. His-133 contributes to the substrate binding site. Positions 179, 207, and 233 each coordinate pyridoxal 5'-phosphate. Lys-236 carries the post-translational modification N6-(pyridoxal phosphate)lysine. Thr-352 is a substrate binding site.

It belongs to the class-II pyridoxal-phosphate-dependent aminotransferase family. BioF subfamily. As to quaternary structure, homodimer. Pyridoxal 5'-phosphate serves as cofactor.

The enzyme catalyses 6-carboxyhexanoyl-[ACP] + L-alanine + H(+) = (8S)-8-amino-7-oxononanoate + holo-[ACP] + CO2. Its pathway is cofactor biosynthesis; biotin biosynthesis. Catalyzes the decarboxylative condensation of pimeloyl-[acyl-carrier protein] and L-alanine to produce 8-amino-7-oxononanoate (AON), [acyl-carrier protein], and carbon dioxide. The sequence is that of 8-amino-7-oxononanoate synthase from Salmonella dublin (strain CT_02021853).